Here is a 406-residue protein sequence, read N- to C-terminus: MNGQTPARHYYKKLVPSLILILNCIQFLSHPTKADPILLAFVFAVYLAFIWIIPYVASTAVSLSIFIGLWLLTDFFWAVSGQEQGAAYFLIVFLMIYAAFRLPSRLSLIFTACLIGGNILLLSSQGGSLNTIISNISIMLGLYVLFSSMRFRREARREAERNHAELAKMHVQLEHAHKELQKAHAELQEASVLSLRYAVLEERTRIARDIHDSIGHELTSVIVQLQSLPYILKSSKEDSEKVIQNVLSVARECLQEVRSVVHQMGRSESMVGLTALRGLIHQVEERSGLHVSLDTAGLSEESWPPNVSETIYRILQEALTNIIRHADASHAAAVISNDKSHLYVTITDDGQFTGSLTYGFGLTGMKERAEKAGGSLTFSAVQPSGLKIELSLPLMTTNKEQKDEQR.

Over 1–13 (MNGQTPARHYYKK) the chain is Cytoplasmic. A helical transmembrane segment spans residues 14–34 (LVPSLILILNCIQFLSHPTKA). The Extracellular segment spans residues 35-36 (DP). Residues 37–57 (ILLAFVFAVYLAFIWIIPYVA) form a helical membrane-spanning segment. Residue serine 58 is a topological domain, cytoplasmic. The next 2 helical transmembrane spans lie at 59 to 79 (TAVS…FWAV) and 80 to 100 (SGQE…YAAF). A topological domain (cytoplasmic) is located at residue arginine 101. Residues 102–122 (LPSRLSLIFTACLIGGNILLL) form a helical membrane-spanning segment. Residues 123–125 (SSQ) lie on the Extracellular side of the membrane. Residues 126–146 (GGSLNTIISNISIMLGLYVLF) form a helical membrane-spanning segment. The Cytoplasmic segment spans residues 147–406 (SSMRFRREAR…TNKEQKDEQR (260 aa)). One can recognise a Histidine kinase domain in the interval 209-396 (DIHDSIGHEL…KIELSLPLMT (188 aa)). Histidine 211 is subject to Phosphohistidine; by autocatalysis.

The protein localises to the cell membrane. It carries out the reaction ATP + protein L-histidine = ADP + protein N-phospho-L-histidine.. In terms of biological role, probable member of the two-component regulatory system YxjM/YxjL. May activate YxjL by phosphorylation. The protein is Sensor histidine kinase YxjM (yxjM) of Bacillus subtilis (strain 168).